Reading from the N-terminus, the 388-residue chain is Zinc finger protein ubi-d4 A (388 aa).

Positions 60 to 190 (GPGSAPGQLY…AKGKGIGSAR (131 aa)) are disordered. Composition is skewed to basic and acidic residues over residues 97 to 107 (PDPEQMLKKEG) and 123 to 137 (DPIE…RDDD). Residues 156-170 (PDDFLDDLDDEDYEE) show a composition bias toward acidic residues. A C2H2-type zinc finger spans residues 205-228 (YACDICGKRYKNRPGLSYHYAHSH). Residues 233 to 264 (EGAGAEDKEDSQPPTPIMHRPEEQKSKKGPDG) are disordered. Residues 251-262 (HRPEEQKSKKGP) are compositionally biased toward basic and acidic residues. 2 PHD-type zinc fingers span residues 269 to 329 (NNYC…CKCC) and 326 to 376 (CKCC…CLDL).

The protein belongs to the requiem/DPF family.

The protein localises to the cytoplasm. It is found in the nucleus. Functionally, may be a transcription factor required for the apoptosis response following survival factor withdrawal from myeloid cells. Might also have a role in the development and maturation of lymphoid cells. In Xenopus laevis (African clawed frog), this protein is Zinc finger protein ubi-d4 A (req-a).